Reading from the N-terminus, the 338-residue chain is Mitoferrin-1 (338 aa).

The disordered stretch occupies residues 1 to 37 (MELRRGGVGNQAAGRRMDGDCRDGGCGSKDAGSEDYE). Solcar repeat units lie at residues 43–131 (ASVS…MKRT), 141–225 (NSHL…LQEQ), and 232–326 (YNPQ…FKYI). 6 helical membrane-spanning segments follow: residues 45 to 64 (VSTHMTAGAMAGILEHSIMY), 106 to 125 (GLNVMMMGAGPAHAMYFACY), 143 to 162 (HLANGVAGSMATLLHDAVMN), 200 to 219 (SYTTQLTMNIPFQSIHFITY), 234 to 253 (PQSHIISGGLAGALAAAATT), and 301 to 320 (GIQARVIYQMPSTAISWSVY).

The protein belongs to the mitochondrial carrier (TC 2.A.29) family. Interacts with ACB10; this interaction stabilizes SLC25A37 and enhances the function of SLC25A37 to import mitochondrial iron during erythroid differentiation. As to expression, highly expressed in hematopoietic organs, fetal liver, bone marrow and spleen.

The protein localises to the mitochondrion inner membrane. It catalyses the reaction Fe(2+)(in) = Fe(2+)(out). In terms of biological role, mitochondrial iron transporter that specifically mediates iron uptake in developing erythroid cells, thereby playing an essential role in heme biosynthesis. This is Mitoferrin-1 (Slc25a37) from Mus musculus (Mouse).